A 420-amino-acid polypeptide reads, in one-letter code: Serine hydroxymethyltransferase (420 aa).

(6S)-5,6,7,8-tetrahydrofolate is bound by residues Leu-121 and Gly-125 to Leu-127. Lys-230 is subject to N6-(pyridoxal phosphate)lysine. Residues Glu-246 and Ser-354–Phe-356 each bind (6S)-5,6,7,8-tetrahydrofolate.

Belongs to the SHMT family. Homodimer. Pyridoxal 5'-phosphate is required as a cofactor.

Its subcellular location is the cytoplasm. It catalyses the reaction (6R)-5,10-methylene-5,6,7,8-tetrahydrofolate + glycine + H2O = (6S)-5,6,7,8-tetrahydrofolate + L-serine. The protein operates within one-carbon metabolism; tetrahydrofolate interconversion. Its pathway is amino-acid biosynthesis; glycine biosynthesis; glycine from L-serine: step 1/1. Its function is as follows. Catalyzes the reversible interconversion of serine and glycine with tetrahydrofolate (THF) serving as the one-carbon carrier. This reaction serves as the major source of one-carbon groups required for the biosynthesis of purines, thymidylate, methionine, and other important biomolecules. Also exhibits THF-independent aldolase activity toward beta-hydroxyamino acids, producing glycine and aldehydes, via a retro-aldol mechanism. This chain is Serine hydroxymethyltransferase, found in Rickettsia prowazekii (strain Madrid E).